The primary structure comprises 476 residues: Ribosomal RNA small subunit methyltransferase F (476 aa).

S-adenosyl-L-methionine-binding positions include 125–131, Glu149, Asp176, and Asp194; that span reads AAAPGSK. Residue Cys247 is the Nucleophile of the active site.

Belongs to the class I-like SAM-binding methyltransferase superfamily. RsmB/NOP family.

Its subcellular location is the cytoplasm. The catalysed reaction is cytidine(1407) in 16S rRNA + S-adenosyl-L-methionine = 5-methylcytidine(1407) in 16S rRNA + S-adenosyl-L-homocysteine + H(+). Functionally, specifically methylates the cytosine at position 1407 (m5C1407) of 16S rRNA. This is Ribosomal RNA small subunit methyltransferase F from Aeromonas salmonicida (strain A449).